A 597-amino-acid polypeptide reads, in one-letter code: MTENYGSMEHRKKSFRNNENLEQQFHPLREELDNAGPINDRTSELSLEGVSKAEAIASTWSKRSIIVAYLGLYLLSFASSLEQQTTYSLQRYATSNFSAHSNLATINLVGNILLAVVRAPMVKAADVFGRSESLSLALGMTVLGYLSLAFSRNIQMFTVAYILYICGQTGLGLLSQLIIADTSSLLNRGILSAIPELPYLATVWIGPVLAQAFHPEKNYGWRLGYGIWAFILPTVSLPLLASLFLNQRKAKAAGLYREHHNLINHSTPEKLRLFYLFWQELDGLGIVLFVSGFTLLLLPFSHSSQVVSPDSTILTLFTITLSIALLVTLCFYDVKYARYPVFALKSLKDRTILGSCVLIFTYFMSYYIFSNFLTSFLQVSYGLSIDMSSLTLNVFVFSMTTTAILSGFLMKRFGRFKMLLMISVPMYVLGILGIILFGINDNHYTRPLVLVLILAGMGGGLLTLSAQIAVQSVSSHAKLGMNLTLYLTFSSVGGAFGSAIAGGVWSKRLSSRLLHDLKDHLPVPEIESIFRDLRTALSYPQGTQIRNIINVAYTATEKDLFHISLVASLFMFAGLVIIRDVPLSTENHDTAVETPSE.

Serine 46 is subject to Phosphoserine. Helical transmembrane passes span 65–85 (IIVA…EQQT), 97–117 (FSAH…LAVV), 131–151 (SESL…LAFS), 159–179 (VAYI…QLII), 190–210 (ILSA…PVLA), 225–245 (YGIW…SLFL), 281–301 (LDGL…LPFS), 312–332 (TILT…LCFY), 357–377 (VLIF…TSFL), 390–410 (LTLN…GFLM), 419–439 (LLMI…LFGI), 448–468 (LVLV…SAQI), 485–505 (LYLT…GGVW), and 558–578 (KDLF…LVII).

It belongs to the major facilitator superfamily.

Its subcellular location is the membrane. Functionally, involved in the transport of siderophore iron and so has a role in iron homeostasis. In Schizosaccharomyces pombe (strain 972 / ATCC 24843) (Fission yeast), this protein is Siderophore iron transporter 2 (str2).